The sequence spans 901 residues: Cyanophycin synthetase (901 aa).

The 255-residue stretch at 224–478 (KRILAASGVP…VAGAVMDMLF (255 aa)) folds into the ATP-grasp domain. An ATP-binding site is contributed by 493–499 (GTNGKTT).

It in the C-terminal section; belongs to the MurCDEF family. As to quaternary structure, homodimer.

It carries out the reaction [L-4-(L-arginin-2-N-yl)aspartate](n) + L-aspartate + ATP = [L-4-(L-arginin-2-N-yl)aspartate](n)-L-aspartate + ADP + phosphate + H(+). It catalyses the reaction [L-4-(L-arginin-2-N-yl)aspartate](n)-L-aspartate + L-arginine + ATP = [L-4-(L-arginin-2-N-yl)aspartate](n+1) + ADP + phosphate + H(+). Functionally, catalyzes the ATP-dependent polymerization of arginine and aspartate to multi-L-arginyl-poly-L-aspartic acid (cyanophycin; a water-insoluble reserve polymer). This is Cyanophycin synthetase (cphA) from Trichormus variabilis (strain ATCC 29413 / PCC 7937) (Anabaena variabilis).